Reading from the N-terminus, the 244-residue chain is tRNA pseudouridine synthase B (244 aa).

The Nucleophile role is filled by aspartate 46.

This sequence belongs to the pseudouridine synthase TruB family. Type 1 subfamily.

It catalyses the reaction uridine(55) in tRNA = pseudouridine(55) in tRNA. Functionally, responsible for synthesis of pseudouridine from uracil-55 in the psi GC loop of transfer RNAs. This Bordetella bronchiseptica (strain ATCC BAA-588 / NCTC 13252 / RB50) (Alcaligenes bronchisepticus) protein is tRNA pseudouridine synthase B.